The following is a 908-amino-acid chain: Probable disease resistance RPP8-like protein 4 (908 aa).

Positions 15 to 57 form a coiled coil; the sequence is DLLSRESERLQGIDEQLDGLKRQLRSLQSLLKDADAKKHGSDR. Positions 146–459 constitute an NB-ARC domain; that stretch reads RQRVQREIRQ…AEGIYDGSTI (314 aa). 192-199 lines the ATP pocket; sequence GMGGIGKT. LRR repeat units follow at residues 575–599, 600–623, and 842–867; these read LTLL…SIGG, LIHL…MRNL, and MPCL…KYIT.

This sequence belongs to the disease resistance NB-LRR family. RPP8/HRT subfamily.

Its function is as follows. Potential disease resistance protein. This Arabidopsis thaliana (Mouse-ear cress) protein is Probable disease resistance RPP8-like protein 4 (RPP8L4).